Consider the following 283-residue polypeptide: Elongation factor Ts (283 aa).

Residues Thr80–Val83 form an involved in Mg(2+) ion dislocation from EF-Tu region.

The protein belongs to the EF-Ts family.

It is found in the cytoplasm. Functionally, associates with the EF-Tu.GDP complex and induces the exchange of GDP to GTP. It remains bound to the aminoacyl-tRNA.EF-Tu.GTP complex up to the GTP hydrolysis stage on the ribosome. This chain is Elongation factor Ts, found in Citrobacter koseri (strain ATCC BAA-895 / CDC 4225-83 / SGSC4696).